We begin with the raw amino-acid sequence, 143 residues long: Antiholin-like protein LrgA (143 aa).

The next 4 helical transmembrane spans lie at 6 to 26 (VYSF…SNII), 30 to 50 (LPIP…LLCL), 61 to 81 (LGTA…ISVI), and 97 to 117 (VIVV…QFIL).

It belongs to the CidA/LrgA family. LrgA subfamily.

Its subcellular location is the cell membrane. Functionally, inhibits the expression or activity of extracellular murein hydrolases by interacting, possibly with LrgB, with the holin-like protein CidA. The LrgAB and CidA proteins may affect the proton motive force of the membrane. May be involved in programmed cell death (PCD), possibly triggering PCD in response to antibiotics and environmental stresses. This chain is Antiholin-like protein LrgA, found in Bacillus anthracis (strain A0248).